The chain runs to 166 residues: NAD(P)H-quinone oxidoreductase subunit I, chloroplastic (166 aa).

4Fe-4S ferredoxin-type domains are found at residues 55–84 and 95–124; these read GRIH…VDWK and LNYS…MTEE. 8 residues coordinate [4Fe-4S] cluster: cysteine 64, cysteine 67, cysteine 70, cysteine 74, cysteine 104, cysteine 107, cysteine 110, and cysteine 114.

It belongs to the complex I 23 kDa subunit family. NDH is composed of at least 16 different subunits, 5 of which are encoded in the nucleus. [4Fe-4S] cluster serves as cofactor.

It is found in the plastid. The protein resides in the chloroplast thylakoid membrane. The catalysed reaction is a plastoquinone + NADH + (n+1) H(+)(in) = a plastoquinol + NAD(+) + n H(+)(out). The enzyme catalyses a plastoquinone + NADPH + (n+1) H(+)(in) = a plastoquinol + NADP(+) + n H(+)(out). In terms of biological role, NDH shuttles electrons from NAD(P)H:plastoquinone, via FMN and iron-sulfur (Fe-S) centers, to quinones in the photosynthetic chain and possibly in a chloroplast respiratory chain. The immediate electron acceptor for the enzyme in this species is believed to be plastoquinone. Couples the redox reaction to proton translocation, and thus conserves the redox energy in a proton gradient. This chain is NAD(P)H-quinone oxidoreductase subunit I, chloroplastic, found in Pericome caudata (Mountain tail-leaf).